The primary structure comprises 188 residues: Biogenesis of lysosome-related organelles complex 1 subunit 5 (188 aa).

The disordered stretch occupies residues 1–24 (MSSSSSSSSPVKSTGSPFIQSLKP). Polar residues predominate over residues 10–19 (PVKSTGSPFI). The stretch at 101–183 (MQDQLASVLK…QYVTMDKELS (83 aa)) forms a coiled coil.

This sequence belongs to the BLOC1S5 family. Component of the biogenesis of lysosome-related organelles complex 1 (BLOC-1).

Component of the BLOC-1 complex, a complex that is required for normal biogenesis of lysosome-related organelles (LRO), such as platelet dense granules and melanosomes. Plays a role in intracellular vesicle trafficking. This chain is Biogenesis of lysosome-related organelles complex 1 subunit 5 (bloc1s5), found in Xenopus laevis (African clawed frog).